The primary structure comprises 144 residues: Large ribosomal subunit protein uL15 (144 aa).

The disordered stretch occupies residues 1-48 (MQLNNLKPADGSKHAKRRVGRGIGSGLGKTAGRGHKGQKSRSGGFHKV). Residues 21 to 31 (RGIGSGLGKTA) show a composition bias toward gly residues.

Belongs to the universal ribosomal protein uL15 family. As to quaternary structure, part of the 50S ribosomal subunit.

Its function is as follows. Binds to the 23S rRNA. This is Large ribosomal subunit protein uL15 from Cupriavidus metallidurans (strain ATCC 43123 / DSM 2839 / NBRC 102507 / CH34) (Ralstonia metallidurans).